Reading from the N-terminus, the 347-residue chain is 5-deoxyribose 1-phosphate isomerase (347 aa).

Substrate is bound by residues 48–50 (RGA), Arg-91, and Gln-198. Residue Asp-239 is the Proton donor of the active site. 249 to 250 (NK) is a substrate binding site.

It belongs to the EIF-2B alpha/beta/delta subunits family. DrdI subfamily.

It carries out the reaction 5-deoxy-alpha-D-ribose 1-phosphate = 5-deoxy-D-ribulose 1-phosphate. It functions in the pathway carbohydrate degradation. Its function is as follows. Catalyzes the isomerization of 5-deoxy-alpha-D-ribose 1-phosphate to 5-deoxy-D-ribulose 1-phosphate, as part of a 5-deoxyribose salvage pathway that recycles this toxic radical SAM enzyme by-product to mainstream metabolites. The protein is 5-deoxyribose 1-phosphate isomerase of Bacillus thuringiensis subsp. konkukian (strain 97-27).